We begin with the raw amino-acid sequence, 603 residues long: Growth-regulating factor 6 (603 aa).

Residues 34 to 58 are disordered; sequence KHGRGNAGDQEHEWRPPAKQARGGD. In terms of domain architecture, QLQ spans 158–193; it reads PFTPSQWIELEHQALIYKYLAANSPVPHSLLIPIRR. The 45-residue stretch at 223–267 folds into the WRC domain; the sequence is DPEPGRCRRTDGKKWRCSRDAVADQKYCERHMNRGRHRSRKHVEG. 2 consecutive short sequence motifs (bipartite nuclear localization signal) follow at residues 228–238 and 256–263; these read RCRRTDGKKWR and RGRHRSRK. Over residues 561–571 the composition is skewed to low complexity; that stretch reads FGSVSSSTGSS. Residues 561-582 form a disordered region; the sequence is FGSVSSSTGSSPRLENHSVYDG.

The protein belongs to the GRF family.

Its subcellular location is the nucleus. Its function is as follows. Transcription activator that plays a regulatory role in gibberellin-induced stem elongation. The sequence is that of Growth-regulating factor 6 (GRF6) from Oryza sativa subsp. japonica (Rice).